Reading from the N-terminus, the 535-residue chain is Ribonuclease Y (535 aa).

The chain crosses the membrane as a helical span at residues 4-24 (IILLIVSALIGLILGYALISI). The tract at residues 118–141 (ENLSSKEKVLDSKEQSLTDKSKHI) is disordered. The 61-residue stretch at 225–285 (TITSVHLPDD…IRREIARMTL (61 aa)) folds into the KH domain. Residues 351–444 (VLRHSVEVGK…VAAADALSSA (94 aa)) form the HD domain.

The protein belongs to the RNase Y family.

Its subcellular location is the cell membrane. Endoribonuclease that initiates mRNA decay. The chain is Ribonuclease Y from Streptococcus pyogenes serotype M2 (strain MGAS10270).